The following is a 650-amino-acid chain: uncharacterized protein (650 aa).

It belongs to the MG032/MG096/MG288 family.

This is an uncharacterized protein from Mycoplasma genitalium (strain ATCC 33530 / DSM 19775 / NCTC 10195 / G37) (Mycoplasmoides genitalium).